The chain runs to 297 residues: MNNLQKQFPHISIKLNEPLSKYTYTKTGGNADIFVMPKSIEETQEIVSYCYQNTIPLTVLGNGSNLIIKDGGIRGVIVHLDLLQTIERKNTQIIAMSGAKLIDTAKFALGESLSGLEFACGIPGSIGGALHMNAGAYGGEISDVLEAATVLTPYGELKKLKRSELKAAYRFSTIAEKNYIVLDATFSLELEDKNIIQAKMDELTAARESKQPLEYPSCGSVFKRPPGHFAGKLIQDSGLQGHIIGGAQVSLKHAGFIVNIGNATATDYMNLIAHVQQTVREKFDVELETEVKIIGED.

The region spanning 27-191 (TGGNADIFVM…LDATFSLELE (165 aa)) is the FAD-binding PCMH-type domain. The active site involves R170. S220 serves as the catalytic Proton donor. E290 is an active-site residue.

This sequence belongs to the MurB family. FAD serves as cofactor.

The protein localises to the cytoplasm. The catalysed reaction is UDP-N-acetyl-alpha-D-muramate + NADP(+) = UDP-N-acetyl-3-O-(1-carboxyvinyl)-alpha-D-glucosamine + NADPH + H(+). The protein operates within cell wall biogenesis; peptidoglycan biosynthesis. Cell wall formation. The chain is UDP-N-acetylenolpyruvoylglucosamine reductase from Listeria welshimeri serovar 6b (strain ATCC 35897 / DSM 20650 / CCUG 15529 / CIP 8149 / NCTC 11857 / SLCC 5334 / V8).